A 272-amino-acid chain; its full sequence is Phosphatidylglycerol--prolipoprotein diacylglyceryl transferase (272 aa).

The next 4 helical transmembrane spans lie at 15-35 (LGPLYVHMYSVFMLAGALVLF), 53-73 (AFAVTSLLIPVILGARLWHVV), 94-114 (GLGFIGGVFSGLICFFVIAKI), and 117-137 (VPPFTFLDALAPGILVALCFA). Residue Arg138 coordinates a 1,2-diacyl-sn-glycero-3-phospho-(1'-sn-glycerol). The next 3 membrane-spanning stretches (helical) occupy residues 174 to 194 (FHPIFLYEIILNVFIIVILLV), 199 to 219 (VFVKTVFPKGSVFAAFLVLYG), and 237 to 257 (FGLDLNYVGAAAMIIVGVLIA).

It belongs to the Lgt family.

Its subcellular location is the cell membrane. It catalyses the reaction L-cysteinyl-[prolipoprotein] + a 1,2-diacyl-sn-glycero-3-phospho-(1'-sn-glycerol) = an S-1,2-diacyl-sn-glyceryl-L-cysteinyl-[prolipoprotein] + sn-glycerol 1-phosphate + H(+). The protein operates within protein modification; lipoprotein biosynthesis (diacylglyceryl transfer). Its function is as follows. Catalyzes the transfer of the diacylglyceryl group from phosphatidylglycerol to the sulfhydryl group of the N-terminal cysteine of a prolipoprotein, the first step in the formation of mature lipoproteins. The sequence is that of Phosphatidylglycerol--prolipoprotein diacylglyceryl transferase from Tropheryma whipplei (strain TW08/27) (Whipple's bacillus).